The following is a 579-amino-acid chain: Probable cytochrome c biosynthesis protein (579 aa).

It belongs to the CcmF/CycK/Ccl1/NrfE/CcsA family.

It localises to the mitochondrion. Its function is as follows. Could be involved in assembly and maturation of cytochromes c. May play a role in guidance of apocytochromes and heme groups for the covalent linkage introduced by the cytochrome-c-heme lyase. In Daucus carota (Wild carrot), this protein is Probable cytochrome c biosynthesis protein.